The chain runs to 421 residues: UDP-N-acetylglucosamine 1-carboxyvinyltransferase (421 aa).

Residue 22–23 (KN) participates in phosphoenolpyruvate binding. Residue Arg93 coordinates UDP-N-acetyl-alpha-D-glucosamine. Cys117 acts as the Proton donor in catalysis. Cys117 carries the 2-(S-cysteinyl)pyruvic acid O-phosphothioketal modification. Residues 122–126 (RPVDL), Asp308, and Leu330 contribute to the UDP-N-acetyl-alpha-D-glucosamine site.

It belongs to the EPSP synthase family. MurA subfamily.

Its subcellular location is the cytoplasm. It carries out the reaction phosphoenolpyruvate + UDP-N-acetyl-alpha-D-glucosamine = UDP-N-acetyl-3-O-(1-carboxyvinyl)-alpha-D-glucosamine + phosphate. The protein operates within cell wall biogenesis; peptidoglycan biosynthesis. Functionally, cell wall formation. Adds enolpyruvyl to UDP-N-acetylglucosamine. The sequence is that of UDP-N-acetylglucosamine 1-carboxyvinyltransferase from Wolinella succinogenes (strain ATCC 29543 / DSM 1740 / CCUG 13145 / JCM 31913 / LMG 7466 / NCTC 11488 / FDC 602W) (Vibrio succinogenes).